A 552-amino-acid chain; its full sequence is Hyaluronan synthase 2 (552 aa).

The Cytoplasmic segment spans residues 1–11 (MYCERFICILR). The chain crosses the membrane as a helical span at residues 12 to 32 (ILGTTLFGVSLLLGITAAYIV). The Extracellular segment spans residues 33–45 (GYQFIQTDNYYFS). The chain crosses the membrane as a helical span at residues 46–66 (FGLYGAILASHLIIQSLFAYL). Over 67-374 (EHRKMKRSLE…NAMWFHKHHL (308 aa)) the chain is Cytoplasmic. A helical transmembrane segment spans residues 375 to 395 (WMTYEAVITGFFPFFLIATVI). At 396–402 (QLFYRGK) the chain is on the extracellular side. The chain crosses the membrane as a helical span at residues 403-423 (IWNILLFLLTVQLVGLIKSSF). The Cytoplasmic segment spans residues 424-429 (ASFLRG). A helical transmembrane segment spans residues 430–450 (NIVMVFMSLYSVLYMSSLLPA). Residues 451–475 (KMFAIATINKAGWGTSGRKTIVVNF) lie on the Extracellular side of the membrane. The chain crosses the membrane as a helical span at residues 476 to 496 (IGLIPVSIWFTILLGRVIFTI). Residues 497–510 (YKESKKPFSESKTT) are Cytoplasmic-facing. Residues 511–531 (VLVIGTILYACYWVLLLTLYL) form a helical membrane-spanning segment. Residues 532-552 (VLITKCGRRKKEQHYDMVLDV) are Extracellular-facing.

The protein belongs to the NodC/HAS family. Homodimer; dimerization promotes enzymatic activity. It depends on Mg(2+) as a cofactor.

The protein resides in the cell membrane. It is found in the endoplasmic reticulum membrane. The protein localises to the vesicle. It localises to the golgi apparatus membrane. Its subcellular location is the lysosome. The catalysed reaction is [hyaluronan](n) + UDP-N-acetyl-alpha-D-glucosamine = N-acetyl-beta-D-glucosaminyl-(1-&gt;4)-[hyaluronan](n) + UDP + H(+). The enzyme catalyses N-acetyl-beta-D-glucosaminyl-(1-&gt;4)-[hyaluronan](n) + UDP-alpha-D-glucuronate = [hyaluronan](n+1) + UDP + H(+). The protein operates within glycan biosynthesis; hyaluronan biosynthesis. Functionally, catalyzes the addition of GlcNAc or GlcUA monosaccharides to the nascent hyaluronan polymer. Therefore, it is essential to hyaluronan synthesis a major component of most extracellular matrices that has a structural role in tissues architectures and regulates cell adhesion, migration and differentiation. This is one of three isoenzymes responsible for cellular hyaluronan synthesis and it is particularly responsible for the synthesis of high molecular mass hyaluronan. The chain is Hyaluronan synthase 2 (HAS2) from Gallus gallus (Chicken).